Reading from the N-terminus, the 27-residue chain is Cupiennin-4a (27 aa).

Glu-27 is modified (glutamic acid 1-amide).

As to expression, expressed by the venom gland.

The protein localises to the secreted. The protein is Cupiennin-4a of Cupiennius salei (American wandering spider).